We begin with the raw amino-acid sequence, 470 residues long: Proline--tRNA ligase (470 aa).

It belongs to the class-II aminoacyl-tRNA synthetase family. ProS type 3 subfamily. As to quaternary structure, homodimer.

It is found in the cytoplasm. The enzyme catalyses tRNA(Pro) + L-proline + ATP = L-prolyl-tRNA(Pro) + AMP + diphosphate. In terms of biological role, catalyzes the attachment of proline to tRNA(Pro) in a two-step reaction: proline is first activated by ATP to form Pro-AMP and then transferred to the acceptor end of tRNA(Pro). The polypeptide is Proline--tRNA ligase (Malacoplasma penetrans (strain HF-2) (Mycoplasma penetrans)).